The chain runs to 629 residues: 1-deoxy-D-xylulose-5-phosphate synthase (629 aa).

Residues His72 and 113 to 115 (GHA) each bind thiamine diphosphate. A Mg(2+)-binding site is contributed by Asp144. Thiamine diphosphate-binding positions include 145 to 146 (GA), Asn174, Tyr287, and Glu370. Asn174 lines the Mg(2+) pocket.

Belongs to the transketolase family. DXPS subfamily. In terms of assembly, homodimer. Mg(2+) serves as cofactor. It depends on thiamine diphosphate as a cofactor.

It carries out the reaction D-glyceraldehyde 3-phosphate + pyruvate + H(+) = 1-deoxy-D-xylulose 5-phosphate + CO2. It functions in the pathway metabolic intermediate biosynthesis; 1-deoxy-D-xylulose 5-phosphate biosynthesis; 1-deoxy-D-xylulose 5-phosphate from D-glyceraldehyde 3-phosphate and pyruvate: step 1/1. Its function is as follows. Catalyzes the acyloin condensation reaction between C atoms 2 and 3 of pyruvate and glyceraldehyde 3-phosphate to yield 1-deoxy-D-xylulose-5-phosphate (DXP). The sequence is that of 1-deoxy-D-xylulose-5-phosphate synthase from Prochlorococcus marinus (strain AS9601).